Here is a 349-residue protein sequence, read N- to C-terminus: Holliday junction branch migration complex subunit RuvB (349 aa).

Residues 1 to 183 (MTDPSRLVTP…FGIPIRLNFY (183 aa)) form a large ATPase domain (RuvB-L) region. Residues leucine 22, arginine 23, glycine 64, lysine 67, threonine 68, threonine 69, 130-132 (EDF), arginine 173, tyrosine 183, and arginine 220 each bind ATP. Position 68 (threonine 68) interacts with Mg(2+). Positions 184–254 (TIEELESIVT…IADHALGALE (71 aa)) are small ATPAse domain (RuvB-S). Residues 257–349 (SAGLDAMDRR…GLFGDTGDQE (93 aa)) are head domain (RuvB-H). Positions 293, 312, and 317 each coordinate DNA.

It belongs to the RuvB family. In terms of assembly, homohexamer. Forms an RuvA(8)-RuvB(12)-Holliday junction (HJ) complex. HJ DNA is sandwiched between 2 RuvA tetramers; dsDNA enters through RuvA and exits via RuvB. An RuvB hexamer assembles on each DNA strand where it exits the tetramer. Each RuvB hexamer is contacted by two RuvA subunits (via domain III) on 2 adjacent RuvB subunits; this complex drives branch migration. In the full resolvosome a probable DNA-RuvA(4)-RuvB(12)-RuvC(2) complex forms which resolves the HJ.

It localises to the cytoplasm. It catalyses the reaction ATP + H2O = ADP + phosphate + H(+). The RuvA-RuvB-RuvC complex processes Holliday junction (HJ) DNA during genetic recombination and DNA repair, while the RuvA-RuvB complex plays an important role in the rescue of blocked DNA replication forks via replication fork reversal (RFR). RuvA specifically binds to HJ cruciform DNA, conferring on it an open structure. The RuvB hexamer acts as an ATP-dependent pump, pulling dsDNA into and through the RuvAB complex. RuvB forms 2 homohexamers on either side of HJ DNA bound by 1 or 2 RuvA tetramers; 4 subunits per hexamer contact DNA at a time. Coordinated motions by a converter formed by DNA-disengaged RuvB subunits stimulates ATP hydrolysis and nucleotide exchange. Immobilization of the converter enables RuvB to convert the ATP-contained energy into a lever motion, pulling 2 nucleotides of DNA out of the RuvA tetramer per ATP hydrolyzed, thus driving DNA branch migration. The RuvB motors rotate together with the DNA substrate, which together with the progressing nucleotide cycle form the mechanistic basis for DNA recombination by continuous HJ branch migration. Branch migration allows RuvC to scan DNA until it finds its consensus sequence, where it cleaves and resolves cruciform DNA. In Rhodopseudomonas palustris (strain TIE-1), this protein is Holliday junction branch migration complex subunit RuvB.